A 248-amino-acid polypeptide reads, in one-letter code: DNA polymerase sliding clamp 2 (248 aa).

This sequence belongs to the PCNA family. Homotrimer. The subunits circularize to form a toroid; DNA passes through its center. Replication factor C (RFC) is required to load the toroid on the DNA.

Its function is as follows. Sliding clamp subunit that acts as a moving platform for DNA processing. Responsible for tethering the catalytic subunit of DNA polymerase and other proteins to DNA during high-speed replication. The polypeptide is DNA polymerase sliding clamp 2 (Sulfurisphaera ohwakuensis).